We begin with the raw amino-acid sequence, 828 residues long: Periplasmic nitrate reductase (828 aa).

A signal peptide (tat-type signal) is located at residues 1–31; it reads MKLSRRHFMKANAVAAAAAVAGITIPIAVRA. Positions 39–95 constitute a 4Fe-4S Mo/W bis-MGD-type domain; it reads IHWDKAPCRFCGVGCGVLVGTQNGRIVASQGDPEAPVNRGLNCIKGYFLPKIMYGQD. 4 residues coordinate [4Fe-4S] cluster: Cys46, Cys49, Cys53, and Cys81. Mo-bis(molybdopterin guanine dinucleotide) is bound by residues Lys83, Gln150, Asn175, Cys179, 212–219, 243–247, 262–264, Met372, Gln376, Asn482, 508–509, Lys531, Asp558, and 718–727; these read WGSNMAEM, STYQH, QTD, SD, and TGRVLEHWHT. Phe794 is a substrate binding site. Residues Asn802 and Lys819 each contribute to the Mo-bis(molybdopterin guanine dinucleotide) site.

The protein belongs to the prokaryotic molybdopterin-containing oxidoreductase family. NasA/NapA/NarB subfamily. Component of the periplasmic nitrate reductase NapAB complex composed of NapA and NapB. It depends on [4Fe-4S] cluster as a cofactor. Mo-bis(molybdopterin guanine dinucleotide) serves as cofactor. In terms of processing, predicted to be exported by the Tat system. The position of the signal peptide cleavage has not been experimentally proven.

The protein resides in the periplasm. The catalysed reaction is 2 Fe(II)-[cytochrome] + nitrate + 2 H(+) = 2 Fe(III)-[cytochrome] + nitrite + H2O. Its function is as follows. Catalytic subunit of the periplasmic nitrate reductase complex NapAB. Receives electrons from NapB and catalyzes the reduction of nitrate to nitrite. In Pectobacterium atrosepticum (strain SCRI 1043 / ATCC BAA-672) (Erwinia carotovora subsp. atroseptica), this protein is Periplasmic nitrate reductase.